We begin with the raw amino-acid sequence, 369 residues long: Flagellar P-ring protein (369 aa).

The first 23 residues, 1–23 (MRSLLRWMGVLLLCGLCAAPAQA), serve as a signal peptide directing secretion.

Belongs to the FlgI family. As to quaternary structure, the basal body constitutes a major portion of the flagellar organelle and consists of four rings (L,P,S, and M) mounted on a central rod.

It is found in the periplasm. Its subcellular location is the bacterial flagellum basal body. In terms of biological role, assembles around the rod to form the L-ring and probably protects the motor/basal body from shearing forces during rotation. The protein is Flagellar P-ring protein of Chromohalobacter salexigens (strain ATCC BAA-138 / DSM 3043 / CIP 106854 / NCIMB 13768 / 1H11).